Consider the following 696-residue polypeptide: MTEIFGKLHRSSNSENTNQASPSTIQSHSTQPVLSNDHSTKVNDYEGKEGASSNGYDPVFMSDRMKMRYNEITAQLHKEQSLKEDKESGSNSSESNGITPMGTYSEKPKLLQSRTPPSSCYIRHDTVVPKDKNGQHAFGRLYVRLHQGRDLNVKSVNAQPYAVITFEKTQVMVPPPFKDIDGGIPISIPSKNRPLAGSASGSSSGLHSELMLADVRCPHWDFETVFDVTKMKSQMVVSVYDKYEDDKFLGSVKITPIFLHEYVQEAWYKLEPLDLTKSLEGEIKVETIYEHIEHVRYGPEDFTALRLIGKGTFGQVYLVRKNDTNRIYAMKKISKKLIVRKKEVTHTLGERNILVRTSLDESPFIVGLKFSFQTASDLYLITDYMSGGELFWHLQHEGRFPEQRAKFYIAELVLALEHLHKHDIIYRDLKPENILLDADGHIALCDFGLSKANLSANATTNTFCGTTEYLAPEVLLEDKGYTKQVDFWSLGVLVFEMCCGWSPFYAPDVQQMYRNIAFGKVRFPKGVLSSEGRSFVRGLLNRNPNHRLGAVADTTELKEHPFFADINWDLLSKKKVQPPFKPNVQNDLDVSNFDKEFTNTNVKNINIVSNVDPANASTPLSNTIQDRFRGFTFVNKSIDEQFQNLGLQENEETDNLHACRTTTHSSVNSINSHGNPRTVDANDPVADTVFGETFEA.

2 disordered regions span residues 1–59 and 77–118; these read MTEI…YDPV and HKEQ…TPPS. Residues 11–37 show a composition bias toward polar residues; the sequence is SSNSENTNQASPSTIQSHSTQPVLSND. Basic and acidic residues-rich tracts occupy residues 38–49 and 77–88; these read HSTKVNDYEGKE and HKEQSLKEDKES. The 151-residue stretch at 122-272 folds into the C2 domain; the sequence is IRHDTVVPKD…VQEAWYKLEP (151 aa). Residues 302–563 form the Protein kinase domain; sequence FTALRLIGKG…TTELKEHPFF (262 aa). ATP contacts are provided by residues 308–316 and K331; that span reads IGKGTFGQV. The active-site Proton acceptor is D428. The region spanning 564-643 is the AGC-kinase C-terminal domain; sequence ADINWDLLSK…VNKSIDEQFQ (80 aa). T632 carries the phosphothreonine modification. S665 is modified (phosphoserine).

Belongs to the protein kinase superfamily. AGC Ser/Thr protein kinase family. cAMP subfamily.

It carries out the reaction L-seryl-[protein] + ATP = O-phospho-L-seryl-[protein] + ADP + H(+). The enzyme catalyses L-threonyl-[protein] + ATP = O-phospho-L-threonyl-[protein] + ADP + H(+). Its function is as follows. Protein kinase that is part of growth control pathway which is at least partially redundant with the cAMP pathway. Required for trehalase activation. This chain is Serine/threonine-protein kinase sck1 (sck1), found in Schizosaccharomyces pombe (strain 972 / ATCC 24843) (Fission yeast).